A 323-amino-acid polypeptide reads, in one-letter code: tRNA dimethylallyltransferase (323 aa).

13-20 (GPTASGKT) lines the ATP pocket. 15–20 (TASGKT) contacts substrate. Interaction with substrate tRNA regions lie at residues 42-45 (DSAL), 166-170 (QRIQR), 251-256 (RCVGYR), and 284-291 (KRQITWLR).

This sequence belongs to the IPP transferase family. In terms of assembly, monomer. It depends on Mg(2+) as a cofactor.

The catalysed reaction is adenosine(37) in tRNA + dimethylallyl diphosphate = N(6)-dimethylallyladenosine(37) in tRNA + diphosphate. Functionally, catalyzes the transfer of a dimethylallyl group onto the adenine at position 37 in tRNAs that read codons beginning with uridine, leading to the formation of N6-(dimethylallyl)adenosine (i(6)A). The chain is tRNA dimethylallyltransferase from Acidovorax sp. (strain JS42).